The following is a 612-amino-acid chain: BTB/POZ domain-containing protein 9 (612 aa).

In terms of domain architecture, BTB spans 36–104 (GDVTFVVEKK…IYTGRATLTD (69 aa)). One can recognise a BACK domain in the interval 142–240 (VCMTFDVASL…SLTELLNVVR (99 aa)). Residues 559-612 (QQSNQKEDSSEEPGTGDPSTPNQQLDPHAPRAPSASSLPPSPGPNSRSPNQQNQ) form a disordered region. A compositionally biased stretch (low complexity) spans 589–612 (RAPSASSLPPSPGPNSRSPNQQNQ).

In terms of tissue distribution, expressed in the brain (at protein level).

The polypeptide is BTB/POZ domain-containing protein 9 (Btbd9) (Mus musculus (Mouse)).